We begin with the raw amino-acid sequence, 543 residues long: Telomerase Cajal body protein 1 homolog (543 aa).

A disordered region spans residues 95–128 (GRPKNAVESPHAGVPMETSLAAEEEANGDEEEES). Over residues 116-127 (AEEEANGDEEEE) the composition is skewed to acidic residues. WD repeat units lie at residues 237 to 283 (PEGG…LRCS), 291 to 329 (DEVM…RFCD), and 378 to 421 (GHKG…QPLV).

The protein belongs to the TCAB1 family.

The protein localises to the nucleus. It localises to the cajal body. Its function is as follows. RNA chaperone that plays a key role in Cajal body formation. Specifically recognizes and binds the Cajal body box (CAB box) present in both small Cajal body RNAs (scaRNAs). Probably acts by mediating localization of scaRNAs to Cajal bodies. This chain is Telomerase Cajal body protein 1 homolog, found in Drosophila melanogaster (Fruit fly).